We begin with the raw amino-acid sequence, 447 residues long: Exodeoxyribonuclease 7 large subunit (447 aa).

Belongs to the XseA family. In terms of assembly, heterooligomer composed of large and small subunits.

It is found in the cytoplasm. It carries out the reaction Exonucleolytic cleavage in either 5'- to 3'- or 3'- to 5'-direction to yield nucleoside 5'-phosphates.. Its function is as follows. Bidirectionally degrades single-stranded DNA into large acid-insoluble oligonucleotides, which are then degraded further into small acid-soluble oligonucleotides. The protein is Exodeoxyribonuclease 7 large subunit of Pediococcus pentosaceus (strain ATCC 25745 / CCUG 21536 / LMG 10740 / 183-1w).